A 207-amino-acid polypeptide reads, in one-letter code: Small ribosomal subunit protein uS4 (207 aa).

A disordered region spans residues 20–45 (TPKAARYMEKRPYAPGEHGRTKRKAD). Residues 93–158 (MRLDALVLRA…TEPFQVAAAG (66 aa)) enclose the S4 RNA-binding domain.

This sequence belongs to the universal ribosomal protein uS4 family. As to quaternary structure, part of the 30S ribosomal subunit. Contacts protein S5. The interaction surface between S4 and S5 is involved in control of translational fidelity.

Its function is as follows. One of the primary rRNA binding proteins, it binds directly to 16S rRNA where it nucleates assembly of the body of the 30S subunit. In terms of biological role, with S5 and S12 plays an important role in translational accuracy. This chain is Small ribosomal subunit protein uS4, found in Leifsonia xyli subsp. xyli (strain CTCB07).